Reading from the N-terminus, the 473-residue chain is Photosystem II CP43 reaction center protein (473 aa).

Positions 1 to 14 (MKTLYSLRRFYPVE) are excised as a propeptide. Threonine 15 carries the N-acetylthreonine modification. Position 15 is a phosphothreonine (threonine 15). Transmembrane regions (helical) follow at residues 69-93 (LFEV…PHLA), 134-155 (LLGP…KDRN), 178-200 (KALY…RRIT), 255-275 (KPFA…LSYS), and 291-312 (WFNN…ASQA). Glutamate 367 serves as a coordination point for [CaMn4O5] cluster. A helical transmembrane segment spans residues 447–471 (RARAAAAGFEKGIDRDFEPVLFMTP).

The protein belongs to the PsbB/PsbC family. PsbC subfamily. As to quaternary structure, PSII is composed of 1 copy each of membrane proteins PsbA, PsbB, PsbC, PsbD, PsbE, PsbF, PsbH, PsbI, PsbJ, PsbK, PsbL, PsbM, PsbT, PsbX, PsbY, PsbZ, Psb30/Ycf12, at least 3 peripheral proteins of the oxygen-evolving complex and a large number of cofactors. It forms dimeric complexes. Binds multiple chlorophylls and provides some of the ligands for the Ca-4Mn-5O cluster of the oxygen-evolving complex. It may also provide a ligand for a Cl- that is required for oxygen evolution. PSII binds additional chlorophylls, carotenoids and specific lipids. is required as a cofactor.

It is found in the plastid. Its subcellular location is the chloroplast thylakoid membrane. Its function is as follows. One of the components of the core complex of photosystem II (PSII). It binds chlorophyll and helps catalyze the primary light-induced photochemical processes of PSII. PSII is a light-driven water:plastoquinone oxidoreductase, using light energy to abstract electrons from H(2)O, generating O(2) and a proton gradient subsequently used for ATP formation. The polypeptide is Photosystem II CP43 reaction center protein (Nuphar advena (Common spatterdock)).